We begin with the raw amino-acid sequence, 133 residues long: Large ribosomal subunit protein bL20 (133 aa).

Belongs to the bacterial ribosomal protein bL20 family.

Its function is as follows. Binds directly to 23S ribosomal RNA and is necessary for the in vitro assembly process of the 50S ribosomal subunit. It is not involved in the protein synthesizing functions of that subunit. The polypeptide is Large ribosomal subunit protein bL20 (Bartonella henselae (strain ATCC 49882 / DSM 28221 / CCUG 30454 / Houston 1) (Rochalimaea henselae)).